Consider the following 465-residue polypeptide: 3-isopropylmalate dehydratase large subunit (465 aa).

[4Fe-4S] cluster-binding residues include cysteine 346, cysteine 406, and cysteine 409.

It belongs to the aconitase/IPM isomerase family. LeuC type 1 subfamily. As to quaternary structure, heterodimer of LeuC and LeuD. It depends on [4Fe-4S] cluster as a cofactor.

The enzyme catalyses (2R,3S)-3-isopropylmalate = (2S)-2-isopropylmalate. The protein operates within amino-acid biosynthesis; L-leucine biosynthesis; L-leucine from 3-methyl-2-oxobutanoate: step 2/4. In terms of biological role, catalyzes the isomerization between 2-isopropylmalate and 3-isopropylmalate, via the formation of 2-isopropylmaleate. This is 3-isopropylmalate dehydratase large subunit from Psychromonas ingrahamii (strain DSM 17664 / CCUG 51855 / 37).